The sequence spans 218 residues: Large ribosomal subunit protein uL3 (218 aa).

The interval 133–158 (RGQGASHGAQAVHRRPGSIGGCATPG) is disordered.

The protein belongs to the universal ribosomal protein uL3 family. In terms of assembly, part of the 50S ribosomal subunit. Forms a cluster with proteins L14 and L19.

In terms of biological role, one of the primary rRNA binding proteins, it binds directly near the 3'-end of the 23S rRNA, where it nucleates assembly of the 50S subunit. The protein is Large ribosomal subunit protein uL3 of Mycolicibacterium vanbaalenii (strain DSM 7251 / JCM 13017 / BCRC 16820 / KCTC 9966 / NRRL B-24157 / PYR-1) (Mycobacterium vanbaalenii).